The primary structure comprises 347 residues: MSRRGPEEEACGVWLDAAALKRQKMQTHLLKLGTKMLTLLPGERKPSIPFTQRRATRQTSITSFVTSQPGMANGGNQKNASSLKENQINRECKSRSQLDCLDQGLEDDCLVSPLATSTPADIREAGHSPQSSQISGCQSLETTSLTMMSFPQPVVLMGTGESKAPLASSFTQFLERSCLLDQREAKRKREGLCGSKTDCPGMGSHIRPPGGKCHQPLDKAKVEKRATAKENRQAPVHLQTYRFGSHSGKKTLLVTKSPCPLSVFSWDIDRKDRDSWSQLFTEDSQGHQVIAHSTKMPFQDVTNARNQGSGQFPDSPQAQGQDGPTLLHLQPHLLFTQDSEGNRVIRH.

Residues 182–347 (QREAKRKREG…DSEGNRVIRH (166 aa)) are interaction with AURKA. An interaction with RBBP8/CtIP region spans residues 273–347 (RDSWSQLFTE…DSEGNRVIRH (75 aa)). Serine 284 carries the phosphoserine modification. The segment covering 301–322 (VTNARNQGSGQFPDSPQAQGQD) has biased composition (polar residues). A disordered region spans residues 301-325 (VTNARNQGSGQFPDSPQAQGQDGPT).

It belongs to the AUNIP family. Interacts (via C-terminus) with AURKA (via C-terminus). Interacts (via N-terminus) with NIN; this interaction blocks NIN phosphorylation by both AURKA and GSK3B. Identified in a complex with NIN and AURKA. Interacts with RBBP8/CtIP.

The protein resides in the nucleus. It is found in the chromosome. It localises to the cytoplasm. The protein localises to the cytoskeleton. Its subcellular location is the microtubule organizing center. The protein resides in the centrosome. It is found in the spindle pole. Functionally, DNA-binding protein that accumulates at DNA double-strand breaks (DSBs) following DNA damage and promotes DNA resection and homologous recombination. Serves as a sensor of DNA damage: binds DNA with a strong preference for DNA substrates that mimic structures generated at stalled replication forks, and anchors RBBP8/CtIP to DSB sites to promote DNA end resection and ensuing homologous recombination repair. Inhibits non-homologous end joining (NHEJ). Required for the dynamic movement of AURKA at the centrosomes and spindle apparatus during the cell cycle. The polypeptide is Aurora kinase A- and ninein-interacting protein (Rattus norvegicus (Rat)).